We begin with the raw amino-acid sequence, 458 residues long: Probable beta-eliminating lyase (458 aa).

Position 257 is an N6-(pyridoxal phosphate)lysine (Lys257).

It belongs to the beta-eliminating lyase family. Pyridoxal 5'-phosphate serves as cofactor.

The chain is Probable beta-eliminating lyase from Trichomonas vaginalis (strain ATCC PRA-98 / G3).